The sequence spans 751 residues: Myb-related protein A (751 aa).

Residues 1 to 22 (MAKRSRSEDEDDDLQYADHDYE) are disordered. 3 HTH myb-type domains span residues 30 to 81 (KKLW…QKVL), 82 to 137 (NPEL…NPEV), and 138 to 188 (KKSS…RRKV). 3 consecutive DNA-binding regions (H-T-H motif) follow at residues 58-81 (WTLI…QKVL), 110-133 (WSLI…HNHL), and 161-184 (WAEI…NSTM). Lys199 is covalently cross-linked (Glycyl lysine isopeptide (Lys-Gly) (interchain with G-Cter in SUMO2)). The transcriptional activation domain stretch occupies residues 230–294 (IPGYQYVSPD…RLPPQPGSFS (65 aa)). A negative regulatory domain region spans residues 297–552 (SGSFLMDDSM…IRRSILGTTP (256 aa)). Lys393 is subject to N6-acetyllysine. Residues Lys591 and Lys601 each participate in a glycyl lysine isopeptide (Lys-Gly) (interchain with G-Cter in SUMO2) cross-link.

In terms of assembly, component of the DREAM complex (also named LINC complex) at least composed of E2F4, E2F5, LIN9, LIN37, LIN52, LIN54, MYBL1, MYBL2, RBL1, RBL2, RBBP4, TFDP1 and TFDP2. The complex exists in quiescent cells where it represses cell cycle-dependent genes. It dissociates in S phase when LIN9, LIN37, LIN52 and LIN54 form a subcomplex that binds to MYBL2. As to expression, predominantly in the testis. Very low levels in the ovaries, spleen and brain.

The protein localises to the nucleus. Transcription factor that specifically recognizes the sequence 5'-YAAC[GT]G-3'. Acts as a master regulator of male meiosis by promoting expression of piRNAs: activates expression of both piRNA precursor RNAs and expression of protein-coding genes involved in piRNA metabolism, such as PIWIL1. The piRNA metabolic process mediates the repression of transposable elements during meiosis by forming complexes composed of piRNAs and Piwi proteins and governs the methylation and subsequent repression of transposons, which is essential for the germline integrity. Transcriptional activator of SOX30. The polypeptide is Myb-related protein A (Mybl1) (Mus musculus (Mouse)).